The primary structure comprises 363 residues: MAEVRLTDIRKSYGSLEVIKGVNLEVSSGEFVVFVGPSGCGKSTLLRMIAGLEDISSGELTIGGTVMNDVDPSKRGIAMVFQTYALYPHMTVRENMGFALRFAGMAKDEIERRVNAAAKILELDALMDRKPKALSGGQRQRVAIGRAIVRQPDVFLFDEPLSNLDAELRVHMRVEIARLHKELNATIVYVTHDQVEAMTLADKIVVMRGGIVEQVGAPLALYDDPDNMFVAGFIGSPRMNFLPAVVIGQAEGGQVTVALKARPDTQLTVACATPPQGGDAVTVGVRPEHFLPAGSGDTQLTAHVDVVEHLGNTSYVYAHTVPGEQIIIEQEERRHGGRYGDEIAVGISAKTSFLFDASGRRIR.

The 231-residue stretch at 4-234 (VRLTDIRKSY…PDNMFVAGFI (231 aa)) folds into the ABC transporter domain. 36-43 (GPSGCGKS) is an ATP binding site.

This sequence belongs to the ABC transporter superfamily.

It is found in the cell inner membrane. Functionally, part of the binding-protein-dependent transport system for lactose. Probably responsible for energy coupling to the transport system. The sequence is that of Lactose transport ATP-binding protein LacK (lacK) from Rhizobium radiobacter (Agrobacterium tumefaciens).